We begin with the raw amino-acid sequence, 515 residues long: Probable coatomer subunit delta (515 aa).

Basic and acidic residues predominate over residues 161–180; that stretch reads AKQAMAEKAKELKRAQKEAL. Residues 161–231 form a disordered region; that stretch reads AKQAMAEKAK…GGKALKLGGK (71 aa). Over residues 187–198 the composition is skewed to low complexity; sequence SYQSSTGISSSS. The MHD domain maps to 276–515; that stretch reads REVVHVRTEE…TFNSENFEIV (240 aa).

It belongs to the adaptor complexes medium subunit family. Delta-COP subfamily. In terms of assembly, oligomeric complex that consists of at least the alpha, beta, beta', gamma, delta, epsilon and zeta subunits.

The protein localises to the cytoplasm. It localises to the golgi apparatus membrane. Its subcellular location is the cytoplasmic vesicle. The protein resides in the COPI-coated vesicle membrane. Functionally, the coatomer is a cytosolic protein complex that binds to dilysine motifs and reversibly associates with Golgi non-clathrin-coated vesicles, which further mediate biosynthetic protein transport from the ER, via the Golgi up to the trans Golgi network. Coatomer complex is required for budding from Golgi membranes, and is essential for the retrograde Golgi-to-ER transport of dilysine-tagged proteins. This chain is Probable coatomer subunit delta, found in Caenorhabditis elegans.